The primary structure comprises 438 residues: Phosphoribosylamine--glycine ligase (438 aa).

In terms of domain architecture, ATP-grasp spans 108 to 316 (REFMERNDIP…LVEIAEGIVK (209 aa)). Position 135–194 (135–194 (IDEYGKPVVVKPLGLTGGKGVKVVGYQLKDNEEAKEYAEYLIKKDGKVLIEERTDGVEFT)) interacts with ATP. Mg(2+) contacts are provided by Q274, E286, and N288. Positions 274, 286, and 288 each coordinate Mn(2+).

This sequence belongs to the GARS family. The cofactor is Mg(2+). Mn(2+) is required as a cofactor.

It catalyses the reaction 5-phospho-beta-D-ribosylamine + glycine + ATP = N(1)-(5-phospho-beta-D-ribosyl)glycinamide + ADP + phosphate + H(+). The protein operates within purine metabolism; IMP biosynthesis via de novo pathway; N(1)-(5-phospho-D-ribosyl)glycinamide from 5-phospho-alpha-D-ribose 1-diphosphate: step 2/2. The chain is Phosphoribosylamine--glycine ligase from Pyrococcus abyssi (strain GE5 / Orsay).